The chain runs to 98 residues: NADH-ubiquinone oxidoreductase chain 4L (98 aa).

The next 3 helical transmembrane spans lie at 1–21 (MSLTYFNVMLAFTMSFLGLLM), 30–50 (LLCLEGLMLSLFVLVTITILI), and 61–81 (IILLVFAACEAALGLSLLVAV).

It belongs to the complex I subunit 4L family. Core subunit of respiratory chain NADH dehydrogenase (Complex I) which is composed of 45 different subunits.

It is found in the mitochondrion inner membrane. It carries out the reaction a ubiquinone + NADH + 5 H(+)(in) = a ubiquinol + NAD(+) + 4 H(+)(out). Its function is as follows. Core subunit of the mitochondrial membrane respiratory chain NADH dehydrogenase (Complex I) which catalyzes electron transfer from NADH through the respiratory chain, using ubiquinone as an electron acceptor. Part of the enzyme membrane arm which is embedded in the lipid bilayer and involved in proton translocation. The polypeptide is NADH-ubiquinone oxidoreductase chain 4L (MT-ND4L) (Pipistrellus abramus (Japanese pipistrelle)).